We begin with the raw amino-acid sequence, 748 residues long: Polyribonucleotide nucleotidyltransferase (748 aa).

The Mg(2+) site is built by D484 and D490. The KH domain occupies 551–610; it reads PRIETMSVPKDKIRDVIGTGGKVIREIVATTGAKVDIEDDGTVRLSSSDPANIEAAREWI. The region spanning 620–688 is the S1 motif domain; sequence GKIYNGKVVN…NRGKVRLSMR (69 aa). Residues 693-748 form a disordered region; it reads ETGAELDDNRPPRENAERRGGERPRRDRGPRRESGDRPARRDMEPEFAPAFLRKDS. Residues 699–736 show a composition bias toward basic and acidic residues; the sequence is DDNRPPRENAERRGGERPRRDRGPRRESGDRPARRDME.

This sequence belongs to the polyribonucleotide nucleotidyltransferase family. The cofactor is Mg(2+).

The protein resides in the cytoplasm. It catalyses the reaction RNA(n+1) + phosphate = RNA(n) + a ribonucleoside 5'-diphosphate. Involved in mRNA degradation. Catalyzes the phosphorolysis of single-stranded polyribonucleotides processively in the 3'- to 5'-direction. The chain is Polyribonucleotide nucleotidyltransferase from Zymomonas mobilis subsp. mobilis (strain ATCC 31821 / ZM4 / CP4).